We begin with the raw amino-acid sequence, 612 residues long: Dihydroxy-acid dehydratase (612 aa).

Asp-81 contacts Mg(2+). Cys-122 provides a ligand contact to [2Fe-2S] cluster. 2 residues coordinate Mg(2+): Asp-123 and Lys-124. At Lys-124 the chain carries N6-carboxylysine. Cys-195 contacts [2Fe-2S] cluster. Glu-491 contacts Mg(2+). Ser-517 functions as the Proton acceptor in the catalytic mechanism.

The protein belongs to the IlvD/Edd family. Homodimer. The cofactor is [2Fe-2S] cluster. Mg(2+) serves as cofactor.

The catalysed reaction is (2R)-2,3-dihydroxy-3-methylbutanoate = 3-methyl-2-oxobutanoate + H2O. It catalyses the reaction (2R,3R)-2,3-dihydroxy-3-methylpentanoate = (S)-3-methyl-2-oxopentanoate + H2O. It participates in amino-acid biosynthesis; L-isoleucine biosynthesis; L-isoleucine from 2-oxobutanoate: step 3/4. The protein operates within amino-acid biosynthesis; L-valine biosynthesis; L-valine from pyruvate: step 3/4. Functions in the biosynthesis of branched-chain amino acids. Catalyzes the dehydration of (2R,3R)-2,3-dihydroxy-3-methylpentanoate (2,3-dihydroxy-3-methylvalerate) into 2-oxo-3-methylpentanoate (2-oxo-3-methylvalerate) and of (2R)-2,3-dihydroxy-3-methylbutanoate (2,3-dihydroxyisovalerate) into 2-oxo-3-methylbutanoate (2-oxoisovalerate), the penultimate precursor to L-isoleucine and L-valine, respectively. This chain is Dihydroxy-acid dehydratase, found in Rhizobium rhizogenes (strain K84 / ATCC BAA-868) (Agrobacterium radiobacter).